Consider the following 91-residue polypeptide: Small ribosomal subunit protein uS19 (91 aa).

The protein belongs to the universal ribosomal protein uS19 family.

In terms of biological role, protein S19 forms a complex with S13 that binds strongly to the 16S ribosomal RNA. The polypeptide is Small ribosomal subunit protein uS19 (Prochlorococcus marinus (strain MIT 9515)).